A 330-amino-acid polypeptide reads, in one-letter code: Elongation factor Ts (330 aa).

Residues 79–82 are involved in Mg(2+) ion dislocation from EF-Tu; the sequence is TDFV.

This sequence belongs to the EF-Ts family.

The protein localises to the cytoplasm. In terms of biological role, associates with the EF-Tu.GDP complex and induces the exchange of GDP to GTP. It remains bound to the aminoacyl-tRNA.EF-Tu.GTP complex up to the GTP hydrolysis stage on the ribosome. This chain is Elongation factor Ts, found in Bacteroides fragilis (strain ATCC 25285 / DSM 2151 / CCUG 4856 / JCM 11019 / LMG 10263 / NCTC 9343 / Onslow / VPI 2553 / EN-2).